The primary structure comprises 240 residues: LexA repressor (240 aa).

The segment at residues 26 to 46 is a DNA-binding region (H-T-H motif); sequence FDEMKDALDLKSKSGIHRLIT. Residues S161 and K199 each act as for autocatalytic cleavage activity in the active site.

This sequence belongs to the peptidase S24 family. As to quaternary structure, homodimer.

It catalyses the reaction Hydrolysis of Ala-|-Gly bond in repressor LexA.. Represses a number of genes involved in the response to DNA damage (SOS response), including recA and lexA. In the presence of single-stranded DNA, RecA interacts with LexA causing an autocatalytic cleavage which disrupts the DNA-binding part of LexA, leading to derepression of the SOS regulon and eventually DNA repair. This is LexA repressor from Methylobacterium nodulans (strain LMG 21967 / CNCM I-2342 / ORS 2060).